The primary structure comprises 368 residues: Phosphoserine aminotransferase (368 aa).

R44 provides a ligand contact to L-glutamate. Residues 78–79, W104, T157, D179, and Q202 each bind pyridoxal 5'-phosphate; that span reads AT. K203 bears the N6-(pyridoxal phosphate)lysine mark. 244-245 is a binding site for pyridoxal 5'-phosphate; the sequence is NT.

It belongs to the class-V pyridoxal-phosphate-dependent aminotransferase family. SerC subfamily. As to quaternary structure, homodimer. It depends on pyridoxal 5'-phosphate as a cofactor.

The protein resides in the cytoplasm. The enzyme catalyses O-phospho-L-serine + 2-oxoglutarate = 3-phosphooxypyruvate + L-glutamate. It catalyses the reaction 4-(phosphooxy)-L-threonine + 2-oxoglutarate = (R)-3-hydroxy-2-oxo-4-phosphooxybutanoate + L-glutamate. It participates in amino-acid biosynthesis; L-serine biosynthesis; L-serine from 3-phospho-D-glycerate: step 2/3. Its pathway is cofactor biosynthesis; pyridoxine 5'-phosphate biosynthesis; pyridoxine 5'-phosphate from D-erythrose 4-phosphate: step 3/5. In terms of biological role, catalyzes the reversible conversion of 3-phosphohydroxypyruvate to phosphoserine and of 3-hydroxy-2-oxo-4-phosphonooxybutanoate to phosphohydroxythreonine. This Neisseria meningitidis serogroup B (strain ATCC BAA-335 / MC58) protein is Phosphoserine aminotransferase.